Reading from the N-terminus, the 100-residue chain is Small ribosomal subunit protein uS14m (100 aa).

This sequence belongs to the universal ribosomal protein uS14 family.

The protein resides in the mitochondrion. The polypeptide is Small ribosomal subunit protein uS14m (RPS14) (Vicia faba (Broad bean)).